The chain runs to 180 residues: NAD(P)H-quinone oxidoreductase subunit I, chloroplastic (180 aa).

4Fe-4S ferredoxin-type domains lie at 55–84 (GRIH…VHWR) and 95–124 (LNYS…MTEE). Residues Cys64, Cys67, Cys70, Cys74, Cys104, Cys107, Cys110, and Cys114 each coordinate [4Fe-4S] cluster.

Belongs to the complex I 23 kDa subunit family. As to quaternary structure, NDH is composed of at least 16 different subunits, 5 of which are encoded in the nucleus. [4Fe-4S] cluster is required as a cofactor.

It localises to the plastid. It is found in the chloroplast thylakoid membrane. It carries out the reaction a plastoquinone + NADH + (n+1) H(+)(in) = a plastoquinol + NAD(+) + n H(+)(out). The enzyme catalyses a plastoquinone + NADPH + (n+1) H(+)(in) = a plastoquinol + NADP(+) + n H(+)(out). Functionally, NDH shuttles electrons from NAD(P)H:plastoquinone, via FMN and iron-sulfur (Fe-S) centers, to quinones in the photosynthetic chain and possibly in a chloroplast respiratory chain. The immediate electron acceptor for the enzyme in this species is believed to be plastoquinone. Couples the redox reaction to proton translocation, and thus conserves the redox energy in a proton gradient. This chain is NAD(P)H-quinone oxidoreductase subunit I, chloroplastic, found in Calycanthus floridus var. glaucus (Eastern sweetshrub).